The chain runs to 148 residues: Sperm-specific protein PHI-2B (148 aa).

Positions 1–35 (PSPSRRSRSRSRSRSKSPKRSPAKKARKTPKKRRA) are enriched in basic residues. 2 disordered regions span residues 1–44 (PSPS…KPST) and 97–148 (GVLV…KSNN). The region spanning 40 to 119 (KKPSTLSMIV…GATGSFRVGK (80 aa)) is the H15 domain. Residues 124–148 (PKKKAKKAKSPKKKSSKKSSNKSNN) show a composition bias toward basic residues.

It belongs to the histone H1/H5 family. As to expression, sperm.

It is found in the nucleus. Its subcellular location is the chromosome. Linker histones are implicated in chromatin remodeling and/or transcriptional regulation during spermiogenesis, the process of spermatid maturation into spermatozoa. The polypeptide is Sperm-specific protein PHI-2B (Mytilus californianus (California mussel)).